The sequence spans 234 residues: Ribosomal RNA small subunit methyltransferase G (234 aa).

S-adenosyl-L-methionine is bound by residues glycine 85, phenylalanine 90, and arginine 155.

It belongs to the methyltransferase superfamily. RNA methyltransferase RsmG family.

Its subcellular location is the cytoplasm. It catalyses the reaction guanosine(527) in 16S rRNA + S-adenosyl-L-methionine = N(7)-methylguanosine(527) in 16S rRNA + S-adenosyl-L-homocysteine. In terms of biological role, specifically methylates the N7 position of guanine in position 527 of 16S rRNA. The sequence is that of Ribosomal RNA small subunit methyltransferase G from Rhodopseudomonas palustris (strain BisB18).